Consider the following 385-residue polypeptide: Exopolygalacturonase rpg15 (385 aa).

The N-terminal stretch at 1 to 26 (MVRFISFTSPIAALLLLSFGVKHAST) is a signal peptide. N-linked (GlcNAc...) asparagine glycans are attached at residues N143, N161, N164, and N180. PbH1 repeat units follow at residues 165 to 195 (STNLVLHDFTLHTVSNNSYLPKNTDALDLYH), 196 to 217 (SSGITFRDSMLTIGDDCVAIKE), 219 to 241 (VEKVIVSNVTCRGGHGYSIGSLG), and 249 to 270 (VKHVNFRNSTCIDCENGVRVKT). The active-site Proton donor is the D210. C212 and C229 are disulfide-bonded. Residue N226 is glycosylated (N-linked (GlcNAc...) asparagine). H233 is a catalytic residue. N256, N319, and N343 each carry an N-linked (GlcNAc...) asparagine glycan. C344 and C350 form a disulfide bridge. A PbH1 5 repeat occupies 350–376 (CSDITFSGIDITKASNTTDNVCVYLEG). N-linked (GlcNAc...) asparagine glycosylation is present at N365.

This sequence belongs to the glycosyl hydrolase 28 family. In terms of processing, N-glycosylated.

It is found in the secreted. The enzyme catalyses [(1-&gt;4)-alpha-D-galacturonosyl](n) + H2O = alpha-D-galacturonate + [(1-&gt;4)-alpha-D-galacturonosyl](n-1). In terms of biological role, specific in hydrolyzing the terminal glycosidic bond of polygalacturonic acid and oligogalacturonates. This Rhizopus delemar (strain RA 99-880 / ATCC MYA-4621 / FGSC 9543 / NRRL 43880) (Mucormycosis agent) protein is Exopolygalacturonase rpg15.